The chain runs to 309 residues: Dihydroorotate dehydrogenase B (NAD(+)), catalytic subunit (309 aa).

FMN is bound by residues S21 and K45 to A46. Residues K45 and N69 to L73 each bind substrate. N99 and N127 together coordinate FMN. Residue N127 coordinates substrate. The Nucleophile role is filled by C130. Residues K165 and I191 each coordinate FMN. N192–T193 provides a ligand contact to substrate. Residues G217, G243–G244, and G265–T266 each bind FMN.

Belongs to the dihydroorotate dehydrogenase family. Type 1 subfamily. In terms of assembly, heterotetramer of 2 PyrK and 2 PyrD type B subunits. FMN serves as cofactor.

It is found in the cytoplasm. It carries out the reaction (S)-dihydroorotate + NAD(+) = orotate + NADH + H(+). The protein operates within pyrimidine metabolism; UMP biosynthesis via de novo pathway; orotate from (S)-dihydroorotate (NAD(+) route): step 1/1. Functionally, catalyzes the conversion of dihydroorotate to orotate with NAD(+) as electron acceptor. The polypeptide is Dihydroorotate dehydrogenase B (NAD(+)), catalytic subunit (pyrD) (Bacillus thuringiensis (strain Al Hakam)).